A 190-amino-acid polypeptide reads, in one-letter code: NADH-quinone oxidoreductase subunit B (190 aa).

[4Fe-4S] cluster contacts are provided by Cys-39, Cys-40, Cys-104, and Cys-135.

This sequence belongs to the complex I 20 kDa subunit family. NDH-1 is composed of 14 different subunits. Subunits NuoB, C, D, E, F, and G constitute the peripheral sector of the complex. [4Fe-4S] cluster serves as cofactor.

Its subcellular location is the cell inner membrane. The catalysed reaction is a quinone + NADH + 5 H(+)(in) = a quinol + NAD(+) + 4 H(+)(out). In terms of biological role, NDH-1 shuttles electrons from NADH, via FMN and iron-sulfur (Fe-S) centers, to quinones in the respiratory chain. The immediate electron acceptor for the enzyme in this species is believed to be a menaquinone. Couples the redox reaction to proton translocation (for every two electrons transferred, four hydrogen ions are translocated across the cytoplasmic membrane), and thus conserves the redox energy in a proton gradient. The sequence is that of NADH-quinone oxidoreductase subunit B from Prosthecochloris aestuarii (strain DSM 271 / SK 413).